Here is a 127-residue protein sequence, read N- to C-terminus: Aspartate 1-decarboxylase (127 aa).

The active-site Schiff-base intermediate with substrate; via pyruvic acid is Ser25. Ser25 is subject to Pyruvic acid (Ser). Thr57 contributes to the substrate binding site. The active-site Proton donor is Tyr58. 73 to 75 (GAA) serves as a coordination point for substrate.

This sequence belongs to the PanD family. In terms of assembly, heterooctamer of four alpha and four beta subunits. Pyruvate is required as a cofactor. In terms of processing, is synthesized initially as an inactive proenzyme, which is activated by self-cleavage at a specific serine bond to produce a beta-subunit with a hydroxyl group at its C-terminus and an alpha-subunit with a pyruvoyl group at its N-terminus.

It localises to the cytoplasm. The enzyme catalyses L-aspartate + H(+) = beta-alanine + CO2. It functions in the pathway cofactor biosynthesis; (R)-pantothenate biosynthesis; beta-alanine from L-aspartate: step 1/1. Catalyzes the pyruvoyl-dependent decarboxylation of aspartate to produce beta-alanine. This chain is Aspartate 1-decarboxylase, found in Bacillus licheniformis (strain ATCC 14580 / DSM 13 / JCM 2505 / CCUG 7422 / NBRC 12200 / NCIMB 9375 / NCTC 10341 / NRRL NRS-1264 / Gibson 46).